Reading from the N-terminus, the 305-residue chain is Protoheme IX farnesyltransferase (305 aa).

9 consecutive transmembrane segments (helical) span residues 31 to 51 (VMSLVIFTGFVGMWLAPYSVH), 52 to 72 (PFIAGIAVVCIALGAGSAGAI), 96 to 118 (VIESDEALSFGLITGFFAVFFMA), 123 to 145 (LLASFLLLFTIFYYICIYTIWLK), 151 to 171 (NIVIGGVSGALPPVIGYAAVS), 179 to 199 (IILFLIIFIWTPPHSWALALF), 225 to 245 (ILIYSILLFIVSLMPFFIGMN), 247 to 267 (FIYLIISGILGVVFLYYAGSL), and 281 to 301 (FAYSIFYLFFIFLLLYSTNTI).

Belongs to the UbiA prenyltransferase family. Protoheme IX farnesyltransferase subfamily.

It is found in the cell inner membrane. It carries out the reaction heme b + (2E,6E)-farnesyl diphosphate + H2O = Fe(II)-heme o + diphosphate. Its pathway is porphyrin-containing compound metabolism; heme O biosynthesis; heme O from protoheme: step 1/1. Converts heme B (protoheme IX) to heme O by substitution of the vinyl group on carbon 2 of heme B porphyrin ring with a hydroxyethyl farnesyl side group. This Rickettsia rickettsii (strain Iowa) protein is Protoheme IX farnesyltransferase.